Here is a 534-residue protein sequence, read N- to C-terminus: CTP synthase (534 aa).

Residues 1–267 (MTKYIFVTGG…DQIVCDHLKL (267 aa)) are amidoligase domain. A CTP-binding site is contributed by Ser-13. Ser-13 contributes to the UTP binding site. Residue 14–19 (SIGKGI) coordinates ATP. Tyr-54 lines the L-glutamine pocket. Asp-71 provides a ligand contact to ATP. Mg(2+)-binding residues include Asp-71 and Glu-141. CTP contacts are provided by residues 148–150 (DIE), 188–193 (KTKPTQ), and Lys-224. Residues 188–193 (KTKPTQ) and Lys-224 contribute to the UTP site. Positions 292-534 (KIALVGKYVE…FVTAAVENMK (243 aa)) constitute a Glutamine amidotransferase type-1 domain. Gly-354 is a binding site for L-glutamine. The active-site Nucleophile; for glutamine hydrolysis is Cys-381. L-glutamine contacts are provided by residues 382–385 (LGMQ), Glu-405, and Arg-463. Catalysis depends on residues His-508 and Glu-510.

This sequence belongs to the CTP synthase family. As to quaternary structure, homotetramer.

The enzyme catalyses UTP + L-glutamine + ATP + H2O = CTP + L-glutamate + ADP + phosphate + 2 H(+). The catalysed reaction is L-glutamine + H2O = L-glutamate + NH4(+). It carries out the reaction UTP + NH4(+) + ATP = CTP + ADP + phosphate + 2 H(+). The protein operates within pyrimidine metabolism; CTP biosynthesis via de novo pathway; CTP from UDP: step 2/2. Its activity is regulated as follows. Allosterically activated by GTP, when glutamine is the substrate; GTP has no effect on the reaction when ammonia is the substrate. The allosteric effector GTP functions by stabilizing the protein conformation that binds the tetrahedral intermediate(s) formed during glutamine hydrolysis. Inhibited by the product CTP, via allosteric rather than competitive inhibition. Its function is as follows. Catalyzes the ATP-dependent amination of UTP to CTP with either L-glutamine or ammonia as the source of nitrogen. Regulates intracellular CTP levels through interactions with the four ribonucleotide triphosphates. This Streptococcus agalactiae serotype V (strain ATCC BAA-611 / 2603 V/R) protein is CTP synthase.